A 438-amino-acid polypeptide reads, in one-letter code: Death-associated inhibitor of apoptosis 1 (438 aa).

A BIR 1 repeat occupies glutamate 44–leucine 110. The disordered stretch occupies residues threonine 194–serine 213. One copy of the BIR 2 repeat lies at glutamate 226–valine 293. Cysteine 263, cysteine 266, histidine 283, and cysteine 290 together coordinate Zn(2+). The disordered stretch occupies residues glycine 322–valine 346. A compositionally biased stretch (low complexity) spans alanine 327–alanine 345. The segment at cysteine 391–arginine 426 adopts an RING-type zinc-finger fold.

The protein belongs to the IAP family. In terms of assembly, interacts (via BIR 2 domain) with Dronc (via residues 114-125). Rpr, hid and grim can outcompete Dronc for binding Diap1 therefore removing Diap1-mediated ubiquitination. Interacts (via BIR 2 domain) with HtrA2; this displaces any bound Dronc. Interacts with Strica. The N-terminally cleaved form interacts with Ubr3 (via UBR-type zinc finger); the interaction promotes the recruitment and uniquitination of substrate capases such as Dronc. Ubiquitinated and degraded by HtrA2 in apoptotic cells; proteolytic cleavage at specific sites in the BIR domain linker region generating inactive fragments. Mutation of one site reduces but does not abolish cleavage as another site is selected by the protease.

It carries out the reaction S-ubiquitinyl-[E2 ubiquitin-conjugating enzyme]-L-cysteine + [acceptor protein]-L-lysine = [E2 ubiquitin-conjugating enzyme]-L-cysteine + N(6)-ubiquitinyl-[acceptor protein]-L-lysine.. Its function is as follows. Anti-apoptotic protein which functions as a caspase regulator, using its E3 ubiquitin-protein ligase activity to smother caspase activity. Binds, ubiquitinates and inactivates initiator caspase Dronc, and effector caspases Drice and Dcp-1. Acts as a Nedd8-E3 ubiquitin-protein ligase for Drice. Suppresses apoptosis by targeting the apoptosome for ubiquitination and inactivation. Plays an important role in cell motility. Overexpression suppresses rpr and hid-dependent cell death in the eye. Interaction of Diap1 with Dronc is required to suppress Dronc-mediated cell death through Diap1-mediated ubiquitination of Dronc. Acts as a positive regulator of Wnt signaling. This Drosophila melanogaster (Fruit fly) protein is Death-associated inhibitor of apoptosis 1 (Diap1).